We begin with the raw amino-acid sequence, 383 residues long: Putative gustatory receptor 22c (383 aa).

Topologically, residues 1–11 (MFASRSDLQSR) are cytoplasmic. The chain crosses the membrane as a helical span at residues 12-32 (LCWIILKATLYSSWFLGVFPY). Topologically, residues 33–45 (RFDSRNGQLKRSR) are extracellular. The helical transmembrane segment at 46 to 66 (FLLFYGLILNFFLLLKMVCSG) threads the bilayer. Over 67–86 (GQKLGIPEAFARNSVLENTH) the chain is Cytoplasmic. The chain crosses the membrane as a helical span at residues 87 to 107 (YTTGMLAVFSCVVIHFLNFWG). Residues 108–144 (STRVQDLANELLVLEYQQFASLNETKCPKFNSFVIQK) lie on the Extracellular side of the membrane. N-linked (GlcNAc...) asparagine glycosylation is present at Asn130. A helical membrane pass occupies residues 145–165 (WLSVIGLLLSYLSIAYGLPGN). Residues 166 to 250 (NFSVEMVLIN…YMVATYEYHM (85 aa)) are Cytoplasmic-facing. Residues 251–271 (TLVLTTGLASNFLAIYSWIVL) form a helical membrane-spanning segment. Topologically, residues 272–279 (DISMNINF) are extracellular. Residues 280-300 (IYLLIFPLFLLVNVWNLWLSI) form a helical membrane-spanning segment. Over 301–360 (AASDLAENAGKSTQTVLKLFADLEVKDIELERSVNEFALLCGHCQFNFHVCGLFTINYKM) the chain is Cytoplasmic. The helical transmembrane segment at 361 to 381 (GFQMIITSFLYLIYMIQFDFM) threads the bilayer. Topologically, residues 382-383 (NL) are extracellular.

Belongs to the insect chemoreceptor superfamily. Gustatory receptor (GR) family. Gr22e subfamily. As to expression, taste bristles in the foreleg and labial palps.

It localises to the cell membrane. Its function is as follows. Probable gustatory receptor which mediates acceptance or avoidance behavior, depending on its substrates. This Drosophila melanogaster (Fruit fly) protein is Putative gustatory receptor 22c (Gr22c).